A 222-amino-acid chain; its full sequence is UPF0758 protein YPN_3801 (222 aa).

An MPN domain is found at 100-222 (VLLNPGITQK…CVSFAERGWL (123 aa)). Zn(2+)-binding residues include histidine 171, histidine 173, and aspartate 184. The JAMM motif motif lies at 171–184 (HNHPSGKAEPSQAD).

The protein belongs to the UPF0758 family. YicR subfamily.

This chain is UPF0758 protein YPN_3801, found in Yersinia pestis bv. Antiqua (strain Nepal516).